Here is a 247-residue protein sequence, read N- to C-terminus: Diglucosylglycerate octanoyltransferase (247 aa).

It belongs to the OctT acyltransferase family. In terms of assembly, homotetramer.

The catalysed reaction is (2R)-2-O-[alpha-D-glucopyranosyl-(1-&gt;6)-alpha-D-glucopyranosyl]-glycerate + octanoyl-CoA = (2R)-2-O-[6-O-octanoyl-alpha-D-glucopyranosyl-(1-&gt;6)-alpha-D-glucopyranosyl]-glycerate + CoA. In terms of biological role, sugar octanoyltransferase likely involved in the biosynthesis of mycobacterial methylglucose lipopolysaccharide (MGLP). Catalyzes the transfer of an octanoyl group from octanoyl-CoA to the C6 OH of the second glucose in diglucosylglycerate (DGG). DGG is the preferred acceptor, but to a lesser extent, GG (glucosylglycerate) can also be used as substrate. DGG and GG are the two earliest intermediates in MGLP biosynthesis. This is Diglucosylglycerate octanoyltransferase from Mycobacterium tuberculosis (strain ATCC 25618 / H37Rv).